The following is a 74-amino-acid chain: Ubiquitin-like protein FUBI (74 aa).

This sequence belongs to the ubiquitin family.

This chain is Ubiquitin-like protein FUBI (Fau), found in Rattus norvegicus (Rat).